The chain runs to 80 residues: uncharacterized protein (80 aa).

This is an uncharacterized protein from Bacillus subtilis (strain 168).